The following is a 477-amino-acid chain: Putative 4-(hydroxymethyl)benzenesulfonate dehydrogenase TsaD2 (477 aa).

NAD(+) is bound by residues 154 to 155, 178 to 181, and 230 to 231; these read WN, KAAE, and GS. Residue Glu-252 is the Proton acceptor of the active site. Leu-253 contacts NAD(+). Cys-286 (nucleophile) is an active-site residue. Glu-381 provides a ligand contact to NAD(+).

Belongs to the aldehyde dehydrogenase family. As to quaternary structure, homodimer.

The enzyme catalyses 4-(hydroxymethyl)benzenesulfonate + NAD(+) = 4-formylbenzenesulfonate + NADH + H(+). In terms of biological role, involved in the toluene-4-sulfonate degradation pathway. Does not discriminate between the sulfonate and the carboxyl substituents and can also be involved in the p-toluenecarboxylate degradation pathway. The polypeptide is Putative 4-(hydroxymethyl)benzenesulfonate dehydrogenase TsaD2 (tsaD2) (Comamonas testosteroni (Pseudomonas testosteroni)).